Here is a 184-residue protein sequence, read N- to C-terminus: Protein PLANT CADMIUM RESISTANCE 5 (184 aa).

Positions 1-26 (MGRPVGQTNQAQPSVQHTASPSNKVS) are enriched in polar residues. Residues 1–33 (MGRPVGQTNQAQPSVQHTASPSNKVSHNGGIGK) form a disordered region. The chain crosses the membrane as a helical span at residues 94 to 114 (AGLLYGALFFTGASFVYSYMF).

It belongs to the cornifelin family.

Its subcellular location is the membrane. In terms of biological role, may be involved in heavy metals transport. The sequence is that of Protein PLANT CADMIUM RESISTANCE 5 (PCR5) from Arabidopsis thaliana (Mouse-ear cress).